We begin with the raw amino-acid sequence, 350 residues long: Phosphatidylinositol transfer protein PDR17 (350 aa).

The CRAL-TRIO domain occupies 139-297 (KVAVENETGK…LYNGLLDFKY (159 aa)).

As to quaternary structure, interacts with phosphatidylserine decarboxylase PSD2. Also interacts with PBI1.

The protein resides in the cytoplasm. It is found in the microsome. The catalysed reaction is a 1,2-diacyl-sn-glycero-3-phospho-(1D-myo-inositol)(in) = a 1,2-diacyl-sn-glycero-3-phospho-(1D-myo-inositol)(out). Has phosphatidylinositol transfer activity. Involved in the regulation of the phospholipid composition of plasma- and endomembranes. Altering plasma membrane composition may provide a possible mechanism for multidrug resistance. Contributes to efficient phospholipase D1 activation and phospholipase B1 inhibition in the regulation of phospholipid turnover. Forms a complex with phosphatidylserine decarboxylase PSD2 that seems essential for maintenance of vacuolar phosphatidylethanolamine (PE) levels. Allows interorganelle phosphatidylserine (PtdSer) transport via a process that involves the acceptor membrane complex PDR17-PDS2 that binds to PBI1 which in turn ligates to SCS2 and phosphatidic acid present in the donor membrane, forming a zone of apposition that facilitates PtdSer transfer. In Saccharomyces cerevisiae (strain ATCC 204508 / S288c) (Baker's yeast), this protein is Phosphatidylinositol transfer protein PDR17.